The sequence spans 910 residues: Leucine--tRNA ligase (910 aa).

The 'HIGH' region motif lies at 42-52; sequence PYPSGKLHMGH. Residues 668–672 carry the 'KMSKS' region motif; the sequence is KMSKS. Residue K671 participates in ATP binding.

It belongs to the class-I aminoacyl-tRNA synthetase family.

It localises to the cytoplasm. It catalyses the reaction tRNA(Leu) + L-leucine + ATP = L-leucyl-tRNA(Leu) + AMP + diphosphate. The protein is Leucine--tRNA ligase of Neisseria meningitidis serogroup A / serotype 4A (strain DSM 15465 / Z2491).